Consider the following 391-residue polypeptide: Pyruvate dehydrogenase E1 component subunit alpha, testis-specific form, mitochondrial (391 aa).

The N-terminal 30 residues, 1–30 (MRKMLATVLSQVFSGMVQKPALRGLLSSLK), are a transit peptide targeting the mitochondrion. 11 residues coordinate pyruvate: His93, Tyr119, Arg120, Ala158, Gly166, Val168, Asp197, Gly198, Ala199, Asn226, and Tyr228. The thiamine diphosphate site is built by Tyr119 and Arg120. Thiamine diphosphate contacts are provided by Gly166, Val168, Asp197, Gly198, Ala199, and Asn226. Asp197 lines the Mg(2+) pocket. Residues Asn226 and Tyr228 each contribute to the Mg(2+) site. Position 293 (His293) interacts with thiamine diphosphate. Phosphoserine occurs at positions 294 and 296. Phosphoserine; by PDK3 is present on Ser301.

In terms of assembly, heterotetramer of two PDHA2 and two PDHB subunits. The heterotetramer interacts with DLAT, and is part of the multimeric pyruvate dehydrogenase complex that contains multiple copies of pyruvate dehydrogenase (E1), dihydrolipoamide acetyltransferase (DLAT, E2) and lipoamide dehydrogenase (DLD, E3). These subunits are bound to an inner core composed of about 48 DLAT and 12 PDHX molecules. It depends on thiamine diphosphate as a cofactor. The cofactor is Mg(2+). In terms of tissue distribution, testis.

It localises to the mitochondrion matrix. The catalysed reaction is N(6)-[(R)-lipoyl]-L-lysyl-[protein] + pyruvate + H(+) = N(6)-[(R)-S(8)-acetyldihydrolipoyl]-L-lysyl-[protein] + CO2. Its activity is regulated as follows. Pyruvate dehydrogenase activity is inhibited by phosphorylation of PDHA2; it is reactivated by dephosphorylation. In terms of biological role, the pyruvate dehydrogenase complex catalyzes the overall conversion of pyruvate to acetyl-CoA and CO(2), and thereby links the glycolytic pathway to the tricarboxylic cycle. This chain is Pyruvate dehydrogenase E1 component subunit alpha, testis-specific form, mitochondrial (Pdha2), found in Rattus norvegicus (Rat).